The chain runs to 65 residues: Ferredoxin-1 (65 aa).

A 4Fe-4S ferredoxin-type domain is found at 3–31 (RKFYVDQDECIACESCVEIAPGAFAMDPE). Residues Cys12, Cys15, Cys18, and Cys55 each coordinate [4Fe-4S] cluster.

Homodimer. Requires [4Fe-4S] cluster as cofactor.

Ferredoxins are iron-sulfur proteins that transfer electrons in a wide variety of metabolic reactions. In Desulfocurvibacter africanus (Desulfovibrio africanus), this protein is Ferredoxin-1 (fd1).